The sequence spans 152 residues: Ribosome maturation factor RimP (152 aa).

Belongs to the RimP family.

It localises to the cytoplasm. Functionally, required for maturation of 30S ribosomal subunits. This is Ribosome maturation factor RimP from Photorhabdus laumondii subsp. laumondii (strain DSM 15139 / CIP 105565 / TT01) (Photorhabdus luminescens subsp. laumondii).